The sequence spans 491 residues: Acetylcholine receptor subunit epsilon (491 aa).

The signal sequence occupies residues 1–20 (MAGALLCALLLLQLLGRGEG). Over 21 to 239 (KNEELRLYHY…VIYSLIIRRK (219 aa)) the chain is Extracellular. Residues asparagine 86 and asparagine 161 are each glycosylated (N-linked (GlcNAc...) asparagine). Cysteine 148 and cysteine 162 are disulfide-bonded. A helical membrane pass occupies residues 240-264 (PLFYVINIIVPCVLISGLVLLAYFL). The Cytoplasmic segment spans residues 265–272 (PAQAGGQK). A helical transmembrane segment spans residues 273-291 (CTVSINVLLAQTVFLFLIA). Residues 292-306 (QKTPETSLSVPLLGR) are Extracellular-facing. The helical transmembrane segment at 307–328 (YLIFVMVVATLIVMNCVIVLNV) threads the bilayer. Residues 329-456 (SLRTPTTHAM…WVRMGKALDS (128 aa)) are Cytoplasmic-facing. Residues 457–480 (ICFWAALVLFLVGSSLIFLGAYFN) traverse the membrane as a helical segment. Topologically, residues 481-491 (RVPQLPYPPCM) are extracellular.

The protein belongs to the ligand-gated ion channel (TC 1.A.9) family. Acetylcholine receptor (TC 1.A.9.1) subfamily. Epsilon/CHRNE sub-subfamily.

The protein resides in the postsynaptic cell membrane. It localises to the cell membrane. The catalysed reaction is K(+)(in) = K(+)(out). It catalyses the reaction Na(+)(in) = Na(+)(out). Functionally, after binding acetylcholine, the AChR responds by an extensive change in conformation that affects all subunits and leads to opening of an ion-conducting channel across the plasma membrane. The polypeptide is Acetylcholine receptor subunit epsilon (CHRNE) (Bos taurus (Bovine)).